The primary structure comprises 479 residues: Aspartyl/glutamyl-tRNA(Asn/Gln) amidotransferase subunit B (479 aa).

This sequence belongs to the GatB/GatE family. GatB subfamily. As to quaternary structure, heterotrimer of A, B and C subunits.

The enzyme catalyses L-glutamyl-tRNA(Gln) + L-glutamine + ATP + H2O = L-glutaminyl-tRNA(Gln) + L-glutamate + ADP + phosphate + H(+). The catalysed reaction is L-aspartyl-tRNA(Asn) + L-glutamine + ATP + H2O = L-asparaginyl-tRNA(Asn) + L-glutamate + ADP + phosphate + 2 H(+). Its function is as follows. Allows the formation of correctly charged Asn-tRNA(Asn) or Gln-tRNA(Gln) through the transamidation of misacylated Asp-tRNA(Asn) or Glu-tRNA(Gln) in organisms which lack either or both of asparaginyl-tRNA or glutaminyl-tRNA synthetases. The reaction takes place in the presence of glutamine and ATP through an activated phospho-Asp-tRNA(Asn) or phospho-Glu-tRNA(Gln). In Mycoplasma mycoides subsp. mycoides SC (strain CCUG 32753 / NCTC 10114 / PG1), this protein is Aspartyl/glutamyl-tRNA(Asn/Gln) amidotransferase subunit B.